A 566-amino-acid polypeptide reads, in one-letter code: Protein OBERON 1 (566 aa).

Positions 1-10 are enriched in polar residues; sequence MGTSSGSNLP. The interval 1 to 79 is disordered; that stretch reads MGTSSGSNLP…KTGPDSHDQH (79 aa). Low complexity predominate over residues 18 to 29; that stretch reads QQLQTSLSLVSS. Over residues 47-60 the composition is skewed to polar residues; it reads ESASSQETWPTSKS. The segment covering 64–79 has biased composition (basic and acidic residues); the sequence is RKTDSGKTGPDSHDQH. The segment at 225 to 289 adopts a PHD-type zinc-finger fold; the sequence is LCMCVICNKF…LFKCRACNHT (65 aa). Residues 407–522 adopt a coiled-coil conformation; sequence EEKTRMYKKA…LFEKIKEQES (116 aa). Residues 545–566 form a disordered region; the sequence is YNASSPRVDPRSNQRNPFRSNP. Residues 555-566 show a composition bias toward polar residues; that stretch reads RSNQRNPFRSNP.

Self-interacts. Interacts with OBE2, OBE3 and OBE4. Binds to VPg of pea seed borne mosaic virus (PSbMV), turnip mosaic virus (TuMV) and lettuce mosaic virus (LMV), but not with VPg of tobacco etch virus (TEV), cowpea mosaic virus (CPMV), tomato black ring virus (TBRV) and grapevine fan leaf virus (GFLV). Interacts with RBL. In terms of tissue distribution, expressed in roots, seedlings, stems, leaves, flowers and siliques, especially in the vasculature.

It is found in the nucleus. The protein localises to the nucleoplasm. Its function is as follows. Probable transcription factor that acts together with OBE2 for the maintenance and/or establishment of both the shoot and root meristems, probably by controlling the expression of the meristem genes such as WUS, PLT1 and PLT2 and of genes required for auxin responses. Promotes cell meristematic activity via the WUSCHEL-CLAVATA pathway. Involved in the development of the basal pole and in auxin-mediated root and vascular development in the embryo. Confers sensitivity to turnip mosaic virus (TuMV) probably by promoting viral movement and multiplication via interaction with TuMV VPg. This chain is Protein OBERON 1, found in Arabidopsis thaliana (Mouse-ear cress).